The chain runs to 262 residues: Dimeric xanthone biosynthesis cluster protein R11 (262 aa).

The interval 69-160 is hemerythrin-like; it reads IADLLFYTKT…PQLFKHLNDE (92 aa).

It functions in the pathway secondary metabolite biosynthesis. Its function is as follows. Part of the gene cluster that mediates the biosynthesis of the dimeric xanthones cryptosporioptides. The pathway begins with the synthesis of atrochrysone thioester by the polyketide synthase dmx-nrPKS. The atrochrysone carboxyl ACP thioesterase dmxR1 then breaks the thioester bond and releases the atrochrysone carboxylic acid from dmx-nrPKS. Atrochrysone carboxylic acid is decarboxylated by the decarboxylase dmxR15, and oxidized by the anthrone oxygenase dmxR16 to yield emodin. Emodin is then reduced to emodin hydroquinone by the oxidoreductase dmxR7. A-ring reduction by the short chain dehydrogenase dmxR18, dehydration by the scytalone dehydratase-like protein dmxR17 and probable spontaneous re-oxidation, results in overall deoxygenation to chrysophanol. Baeyer-Villiger oxidation by the Baeyer-Villiger monooxygenase (BVMO) dmxR6 then yields monodictylactone in equilibrium with monodictyphenone. In the case of the cryptosporioptides biosynthesis, monodictylactone is reduced at C-12 to an alcohol (by the short chain dehydrogenases dmxR12 or dmxR8) and hydroxylated at C-5 by dmxR9, yielding the electron-rich aromatic which could eliminate H(2)O to form the ortho-quinonemethide, followed by tautomerisation to paraquinone and complete the formal reduction to produce the 10-methylgroup. Conjugate addition of C-4a-OH to the resulting paraquinone by the monooxygenase dmxR10 then gives cyclohexadienone, which is then reduced at C-5 by the short chain dehydrogenase dmxR3 to give the dihydroxanthone. The 6,7-epoxide in the cryptosporioptides could be introduced by the cytochrome P450 monooxygenase dmxL3. The highly reducing PKS dmxL2 manufactures butyrate, which is further carboxylated by dmxL1 to form ethylmalonate. It is not yet clear whether the carboxylation occurs while the butyrate is attached to the ACP of dmxL2, but this unusual fungal metabolite could then be esterified to O-5 by the O-acetyltransferase dmxR13. Finally, dimerization performed by dmxR5 gives the observed dimers cryptosporioptides A, B and C as the final products of the pathway. This chain is Dimeric xanthone biosynthesis cluster protein R11, found in Cryptosporiopsis sp. (strain 8999).